The primary structure comprises 311 residues: Iron-binding protein YfeA (311 aa).

The first 31 residues, 1–31 (MIERLNSPFLRAAALFTIVAFSSLISTAALA), serve as a signal peptide directing secretion. Fe(2+)-binding residues include His76, His141, Glu207, and Asp282.

It belongs to the bacterial solute-binding protein 9 family. Monomer.

Its subcellular location is the periplasm. In terms of biological role, part of the ATP-binding cassette (ABC) transport system YfeABC involved in iron import. Binds iron with high affinity and specificity and delivers it to the membrane permease for translocation into the cytoplasm. Also binds Mn(2+) and Zn(2+). This is Iron-binding protein YfeA (yfeA) from Yersinia pestis.